Consider the following 122-residue polypeptide: Probable F-box protein At4g23960 (122 aa).

Positions 1-45 (MIEQLFPEVTCYALRYLDYSSLCQLSMTSSSMRKTANDDVLWRAL) constitute an F-box domain.

The protein is Probable F-box protein At4g23960 of Arabidopsis thaliana (Mouse-ear cress).